A 3078-amino-acid polypeptide reads, in one-letter code: Homeobox-like protein HDP1 (3078 aa).

Disordered stretches follow at residues 1-29 (MKRG…DNSN), 59-164 (LHNS…INDN), 203-306 (SKRK…NIGK), 949-980 (NAEI…QDEN), 1323-1390 (DEDS…KDRK), 1415-1445 (SSSN…NNKN), 1939-2046 (KVND…QDKF), 2115-2216 (TNES…QYNY), 2599-2637 (AYMN…DDNI), and 2959-3019 (QQNN…NNGP). Residues 14 to 29 (CPSNGMASSQRNDNSN) show a composition bias toward polar residues. The segment covering 59–84 (LHNSSSRESKDMKLSEEPRHINEKCI) has biased composition (basic and acidic residues). 2 stretches are compositionally biased toward low complexity: residues 85 to 94 (NDNNKINNNN) and 114 to 127 (NNNN…TKNN). 5 stretches are compositionally biased toward polar residues: residues 128–137 (IFFQTNNPDT), 148–157 (KQENTSSSLH), 209–229 (NSNN…NNIT), 237–252 (TSSI…NTVH), and 949–960 (NAEIHESNSPNH). The span at 1368–1380 (RKNKINRGSKGKH) shows a compositional bias: basic residues. Residues 1415–1433 (SSSNYEEGNSSSNEENNIS) are compositionally biased toward low complexity. The segment covering 1434–1445 (TDKNISNTNNKN) has biased composition (polar residues). Residues 1939–1993 (KVNDSNNSNDANEGNNANYSNDSSNTNNNTSSSTNNSNNNTSCSSQNTTTSSENN) show a composition bias toward low complexity. 2 stretches are compositionally biased toward basic and acidic residues: residues 2012–2021 (KDTQKEKNNL) and 2029–2046 (YEDR…QDKF). Residues 2115–2126 (TNESIKTNSDQN) are compositionally biased toward polar residues. The segment covering 2139 to 2160 (MNNDNYNSSYDNVHNDNDNNMV) has biased composition (low complexity). Basic and acidic residues predominate over residues 2163–2177 (DSSRQDNMEKQKSGE). The span at 2192–2201 (NDNDNDDNND) shows a compositional bias: acidic residues. Low complexity-rich tracts occupy residues 2202–2216 (NDNN…QYNY), 2602–2630 (NDNN…YSYD), and 2959–2989 (QQNN…QKNN). Polar residues predominate over residues 2990-3006 (LSEVQVSNINTPSSYNI). The interval 2991–3078 (SEVQVSNINT…GKRRKNEDNK (88 aa)) is DNA-binding.

As to quaternary structure, homodimer.

It is found in the nucleus. The protein localises to the chromosome. Its function is as follows. Transcriptional regulator which binds to the DNA motifs 5'-GTGCACAC-3' (motif A) and 5'-[GTA]TGTA[CT][GA]TAC-3' (motif B) of genes essential for early gametocyte development, including those critical for the expansion of the inner membrane complex (IMC). The protein is Homeobox-like protein HDP1 of Plasmodium falciparum (isolate NF54).